Here is a 1173-residue protein sequence, read N- to C-terminus: Ubiquitin conjugation factor E4 B (1173 aa).

At M1 the chain carries N-acetylmethionine. A disordered region spans residues 1 to 155 (MEELSADEIR…EPSSGPEVSE (155 aa)). The segment covering 16–33 (RLAGGQTSQPTTPLTSPQ) has biased composition (low complexity). A phosphoserine mark is found at S23 and S31. The span at 51–64 (QSLGLNVHNMTPAT) shows a compositional bias: polar residues. A compositionally biased stretch (low complexity) spans 76 to 99 (SQSSEGVSSLSSSPSNSLETQSQS). Phosphoserine occurs at positions 84, 88, 90, 101, 103, 105, and 124. Basic and acidic residues predominate over residues 134–147 (NDRREKRSLSDKEP). A phosphoserine mark is found at S238, S674, and S840. The disordered stretch occupies residues 928–948 (NKEQWDQLPRDQQQARQSQLA). Over residues 937 to 948 (RDQQQARQSQLA) the composition is skewed to low complexity. Residues 1098-1171 (DAPDEFRDPL…QAWMREKQSS (74 aa)) enclose the U-box domain. Phosphoserine is present on S1136.

This sequence belongs to the ubiquitin conjugation factor E4 family. Interacts with VCP. Interacts with STUB1/CHIP and UNC45B. Post-translationally, proteolytically cleaved by caspases during apoptosis. Cleaved efficiently at Asp-123 by caspase-6 and granzyme B. Cleaved with approximately 10-fold less efficiency at Asp-109 by caspase-3 and caspase-7. As to expression, expressed predominantly in neuronal tissues. Also detected in liver, heart, brain, kidney and testis.

The protein resides in the cytoplasm. It localises to the nucleus. The catalysed reaction is S-ubiquitinyl-[E2 ubiquitin-conjugating enzyme]-L-cysteine + [acceptor protein]-L-lysine = [E2 ubiquitin-conjugating enzyme]-L-cysteine + N(6)-ubiquitinyl-[acceptor protein]-L-lysine.. The protein operates within protein modification; protein ubiquitination. Functionally, ubiquitin-protein ligase that probably functions as an E3 ligase in conjunction with specific E1 and E2 ligases. May also function as an E4 ligase mediating the assembly of polyubiquitin chains on substrates ubiquitinated by another E3 ubiquitin ligase. May regulate myosin assembly in striated muscles together with STUB1 and VCP/p97 by targeting myosin chaperone UNC45B for proteasomal degradation. The protein is Ubiquitin conjugation factor E4 B of Mus musculus (Mouse).